The primary structure comprises 405 residues: uncharacterized protein (405 aa).

The next 12 helical transmembrane spans lie at 19–39, 47–67, 85–105, 107–127, 156–176, 178–198, 224–244, 252–272, 283–303, 309–329, 344–364, and 366–386; these read IVSI…PLAV, VMGF…FATL, IVVF…TAGL, ASLP…LGIG, GIVT…FYHW, GLQA…LLAI, GMAL…ITLF, GAAF…LLFP, VAMI…VATM, IGVL…GVVA, TYTV…GLVM, and WAGV…ALLL.

It belongs to the major facilitator superfamily. YhhS family.

Its subcellular location is the cell inner membrane. This is an uncharacterized protein from Escherichia coli O6:H1 (strain CFT073 / ATCC 700928 / UPEC).